The sequence spans 83 residues: Exodeoxyribonuclease 7 small subunit (83 aa).

The protein belongs to the XseB family. In terms of assembly, heterooligomer composed of large and small subunits.

The protein localises to the cytoplasm. It carries out the reaction Exonucleolytic cleavage in either 5'- to 3'- or 3'- to 5'-direction to yield nucleoside 5'-phosphates.. Its function is as follows. Bidirectionally degrades single-stranded DNA into large acid-insoluble oligonucleotides, which are then degraded further into small acid-soluble oligonucleotides. This chain is Exodeoxyribonuclease 7 small subunit, found in Heliobacterium modesticaldum (strain ATCC 51547 / Ice1).